Reading from the N-terminus, the 263-residue chain is 3-methyl-2-oxobutanoate hydroxymethyltransferase (263 aa).

Positions 44 and 83 each coordinate Mg(2+). Residues 44 to 45 (DS), Asp-83, and Lys-112 contribute to the 3-methyl-2-oxobutanoate site. Glu-114 contacts Mg(2+). Glu-181 functions as the Proton acceptor in the catalytic mechanism.

This sequence belongs to the PanB family. In terms of assembly, homodecamer; pentamer of dimers. Mg(2+) serves as cofactor.

The protein resides in the cytoplasm. The catalysed reaction is 3-methyl-2-oxobutanoate + (6R)-5,10-methylene-5,6,7,8-tetrahydrofolate + H2O = 2-dehydropantoate + (6S)-5,6,7,8-tetrahydrofolate. Its pathway is cofactor biosynthesis; (R)-pantothenate biosynthesis; (R)-pantoate from 3-methyl-2-oxobutanoate: step 1/2. Functionally, catalyzes the reversible reaction in which hydroxymethyl group from 5,10-methylenetetrahydrofolate is transferred onto alpha-ketoisovalerate to form ketopantoate. The sequence is that of 3-methyl-2-oxobutanoate hydroxymethyltransferase from Sulfurimonas denitrificans (strain ATCC 33889 / DSM 1251) (Thiomicrospira denitrificans (strain ATCC 33889 / DSM 1251)).